The sequence spans 253 residues: Sortase SrtE2 (253 aa).

Positions 1–11 (MAATTDTEHQE) are enriched in basic and acidic residues. A disordered region spans residues 1–23 (MAATTDTEHQEQAGTGGRGRRRP). Residues 30-50 (AVSVLGELLITAGLVMGLFVV) traverse the membrane as a helical segment. Residues 69–89 (EKVRDDWAQDRVGGSGQDGPG) form a disordered region. C220 is an active-site residue.

It belongs to the bacterial sortase family. Class E subfamily.

The protein resides in the cell membrane. The catalysed reaction is The enzyme catalyzes a cell wall sorting reaction in which a surface protein with a sorting signal containing a LPXTG motif is cleaved between the Thr and Gly residue. The resulting threonine carboxyl end of the protein is covalently attached to a pentaglycine cross-bridge of peptidoglycan.. Functionally, transpeptidase that anchors surface proteins to the cell wall. Recognizes Leu-Ala-x-Thr-Gly and Leu-Pro-x-Thr-Gly, with a preference for the former. Unlike the S.aureus sortase it cleaves not only the Thr-Gly motif but also the Ala-X bond; an Ala-Glu bond is a better substrate than the Thr-Gly motif in vitro. Among its possible substrates are the chaplins ChpA, ChpB and ChpC; this enzyme is more important for ChpC attachment than is SrtE1. A double knockout mutant of srtE1 and srtE2 shows a developmental defect in aerial hyphae formation more dramatic than that due to chaplin deletion. The chain is Sortase SrtE2 from Streptomyces coelicolor (strain ATCC BAA-471 / A3(2) / M145).